The primary structure comprises 180 residues: Diphosphoinositol polyphosphate phosphohydrolase 2 (180 aa).

Position 1 is an N-acetylmethionine (methionine 1). Residues arginine 10, 18 to 20 (KKR), and 39 to 41 (SSR) each bind substrate. One can recognise a Nudix hydrolase domain in the interval 18-144 (KKRAACLCFR…VHAEYLEKLK (127 aa)). Mg(2+) contacts are provided by glycine 50 and glutamate 66. The short motif at 51–72 (GGMEPEEEPGGAAVREVYEEAG) is the Nudix box element. Glutamate 69 (proton acceptor) is an active-site residue. Glutamate 70 is a Mg(2+) binding site. Residues 89 to 91 (RKH), arginine 115, and lysine 133 contribute to the substrate site.

The protein belongs to the Nudix hydrolase family. DIPP subfamily. The cofactor is Mg(2+). Requires Mn(2+) as cofactor. Expressed in heart and, at lower level in skeletal muscle, pancreas and kidney.

The protein resides in the cytoplasm. The enzyme catalyses diphospho-myo-inositol polyphosphate + H2O = myo-inositol polyphosphate + phosphate.. The catalysed reaction is 5-diphospho-1D-myo-inositol 1,2,3,4,6-pentakisphosphate + H2O = 1D-myo-inositol hexakisphosphate + phosphate + H(+). It catalyses the reaction 3,5-bis(diphospho)-1D-myo-inositol 1,2,4,6-tetrakisphosphate + H2O = 3-diphospho-1D-myo-inositol 1,2,4,5,6-pentakisphosphate + phosphate + 2 H(+). It carries out the reaction 5-diphospho-1D-myo-inositol 1,3,4,6-tetrakisphosphate + H2O = 1D-myo-inositol 1,3,4,5,6-pentakisphosphate + phosphate + H(+). The enzyme catalyses P(1),P(6)-bis(5'-adenosyl) hexaphosphate + H2O = 2 ATP + 2 H(+). The catalysed reaction is P(1),P(5)-bis(5'-adenosyl) pentaphosphate + H2O = ADP + ATP + 2 H(+). It catalyses the reaction 5-phospho-alpha-D-ribose 1-diphosphate + H2O = alpha-D-ribose 1,5-bisphosphate + phosphate + H(+). Its function is as follows. Cleaves the beta-phosphate from diphosphoinositol polyphosphates such as PP-InsP5 (diphosphoinositol pentakisphosphate), PP-InsP4 (diphosphoinositol tetrakisphosphate) and [PP]2-InsP4 (bisdiphosphoinositol tetrakisphosphate), suggesting that it may play a role in signal transduction. Diadenosine polyphosphates, particularly Ap6A (P(1),P(6)-bis(5a-adenosyl) hexaphosphate) and Ap5A (P(1),P(5)-bis(5'-adenosyl) pentaphosphate) are downstream effectors of a signaling cascade that regulates cardiac KATP channels, can also be substrates, although with lower preference than the diphosphoinositol polyphosphates. Can also catalyze the hydrolysis of 5-phosphoribose 1-diphosphate, generating the glycolytic activator ribose 1,5-bisphosphate. Does not play a role in U8 snoRNA decapping activity. Binds U8 snoRNA. The polypeptide is Diphosphoinositol polyphosphate phosphohydrolase 2 (Homo sapiens (Human)).